A 212-amino-acid polypeptide reads, in one-letter code: Redox-sensing transcriptional repressor Rex (212 aa).

A DNA-binding region (H-T-H motif) is located at residues 18-57; that stretch reads LYYRFVNTLKSKGIDRVNSKAISEALNIESATIRRDFSYF. 92–97 lines the NAD(+) pocket; that stretch reads GVGNLG.

The protein belongs to the transcriptional regulatory Rex family. As to quaternary structure, homodimer.

Its subcellular location is the cytoplasm. In terms of biological role, modulates transcription in response to changes in cellular NADH/NAD(+) redox state. The polypeptide is Redox-sensing transcriptional repressor Rex (Staphylococcus haemolyticus (strain JCSC1435)).